We begin with the raw amino-acid sequence, 306 residues long: GTPase Era (306 aa).

Residues 13–181 (YCGFIAIVGR…EKIVRESLHE (169 aa)) form the Era-type G domain. The segment at 21–28 (GRPNVGKS) is G1. 21 to 28 (GRPNVGKS) provides a ligand contact to GTP. A G2 region spans residues 47 to 51 (QTTRH). The interval 68–71 (DTPG) is G3. GTP is bound by residues 68–72 (DTPGL) and 130–133 (NKID). Residues 130-133 (NKID) are G4. The segment at 160 to 162 (ISA) is G5. In terms of domain architecture, KH type-2 spans 212 to 289 (TGDELPYSVT…HLELWVKVKS (78 aa)).

The protein belongs to the TRAFAC class TrmE-Era-EngA-EngB-Septin-like GTPase superfamily. Era GTPase family. In terms of assembly, monomer.

The protein localises to the cytoplasm. Its subcellular location is the cell inner membrane. Its function is as follows. An essential GTPase that binds both GDP and GTP, with rapid nucleotide exchange. Plays a role in 16S rRNA processing and 30S ribosomal subunit biogenesis and possibly also in cell cycle regulation and energy metabolism. The chain is GTPase Era from Pasteurella multocida (strain Pm70).